The chain runs to 141 residues: MLMPKRVKYRKQQRGHNRGMAHRGNTVAFGEYGLMALEATWMTSRQIEAARRAISHHVKRGGKIWIRIFPDKPVTAKPAETRMGSGKGAVDHYVAVIKPGRILFELAGVRPEVAHEALERAAQKLPIKCKIVPREDLEGAA.

The disordered stretch occupies residues 1–21; the sequence is MLMPKRVKYRKQQRGHNRGMA.

Belongs to the universal ribosomal protein uL16 family. Part of the 50S ribosomal subunit.

In terms of biological role, binds 23S rRNA and is also seen to make contacts with the A and possibly P site tRNAs. In Roseiflexus sp. (strain RS-1), this protein is Large ribosomal subunit protein uL16.